Reading from the N-terminus, the 250-residue chain is Hydroxyacylglutathione hydrolase (250 aa).

Positions 52, 54, 56, 57, 107, 128, and 166 each coordinate Zn(2+).

This sequence belongs to the metallo-beta-lactamase superfamily. Glyoxalase II family. Monomer. Zn(2+) serves as cofactor.

It catalyses the reaction an S-(2-hydroxyacyl)glutathione + H2O = a 2-hydroxy carboxylate + glutathione + H(+). Its pathway is secondary metabolite metabolism; methylglyoxal degradation; (R)-lactate from methylglyoxal: step 2/2. In terms of biological role, thiolesterase that catalyzes the hydrolysis of S-D-lactoyl-glutathione to form glutathione and D-lactic acid. This is Hydroxyacylglutathione hydrolase from Neisseria gonorrhoeae (strain ATCC 700825 / FA 1090).